The following is a 1010-amino-acid chain: Phosphoenolpyruvate carboxylase (1010 aa).

The span at 1–18 (MIMRSPETSGASMPQSTA) shows a compositional bias: polar residues. Disordered stretches follow at residues 1 to 36 (MIMRSPETSGASMPQSTAHVPDGEQPRASGGSPGAG) and 132 to 154 (LRPSRSQDDETAAPFDPFAPPLA). Active-site residues include histidine 195 and lysine 652. Positions 967-986 (QNRQPPMSESPGTPEDRRTY) are disordered.

Belongs to the PEPCase type 1 family. Mg(2+) is required as a cofactor.

The enzyme catalyses oxaloacetate + phosphate = phosphoenolpyruvate + hydrogencarbonate. Functionally, forms oxaloacetate, a four-carbon dicarboxylic acid source for the tricarboxylic acid cycle. This chain is Phosphoenolpyruvate carboxylase, found in Parasynechococcus marenigrum (strain WH8102).